A 307-amino-acid chain; its full sequence is Elongation factor Ts (307 aa).

The interval 80-83 (TDFV) is involved in Mg(2+) ion dislocation from EF-Tu.

It belongs to the EF-Ts family.

It is found in the cytoplasm. Its function is as follows. Associates with the EF-Tu.GDP complex and induces the exchange of GDP to GTP. It remains bound to the aminoacyl-tRNA.EF-Tu.GTP complex up to the GTP hydrolysis stage on the ribosome. The polypeptide is Elongation factor Ts (Nitrobacter hamburgensis (strain DSM 10229 / NCIMB 13809 / X14)).